A 247-amino-acid chain; its full sequence is tRNA pseudouridine synthase A (247 aa).

The active-site Nucleophile is aspartate 53. Residue tyrosine 111 participates in substrate binding.

This sequence belongs to the tRNA pseudouridine synthase TruA family. Homodimer.

It catalyses the reaction uridine(38/39/40) in tRNA = pseudouridine(38/39/40) in tRNA. Its function is as follows. Formation of pseudouridine at positions 38, 39 and 40 in the anticodon stem and loop of transfer RNAs. The chain is tRNA pseudouridine synthase A from Bacillus pumilus (strain SAFR-032).